Reading from the N-terminus, the 149-residue chain is Large ribosomal subunit protein uL13 (149 aa).

The protein belongs to the universal ribosomal protein uL13 family. In terms of assembly, part of the 50S ribosomal subunit.

Functionally, this protein is one of the early assembly proteins of the 50S ribosomal subunit, although it is not seen to bind rRNA by itself. It is important during the early stages of 50S assembly. This Chlamydia pneumoniae (Chlamydophila pneumoniae) protein is Large ribosomal subunit protein uL13.